The following is a 107-amino-acid chain: Large ribosomal subunit protein uL24 (107 aa).

It belongs to the universal ribosomal protein uL24 family. Part of the 50S ribosomal subunit.

Functionally, one of two assembly initiator proteins, it binds directly to the 5'-end of the 23S rRNA, where it nucleates assembly of the 50S subunit. Its function is as follows. One of the proteins that surrounds the polypeptide exit tunnel on the outside of the subunit. This Coxiella burnetii (strain Dugway 5J108-111) protein is Large ribosomal subunit protein uL24.